Consider the following 1565-residue polypeptide: MVPESAPNGNSQPLPSCFTTTGVPSPSKPRVSELVLQRMKQFKRADPERLRHASEESPQKTALGDDVPRSPPEETVGENEYKLDATDSDAAMALALQQEFRREEASSHHDSLEEKGLFFCQMCQKNLSAMNVTRREQHVNRCLDEAEKAQRPASPRIPDCPICGKPFLTTKSRISHLKQCAVRMEVGPQLLLQAVRLQTAQPEVDGSPQVPSFSNNVGGLKRKGVTTKREPRRRKVNKPEAPSEDLLVAMALSRSEVEHCPVVPPLRLENAFSEKIRLGAEKKSRKKRPPVCPPQLVTQDSETTGRQIEDRVAQLLSEEAELSCTPPLLASKISKEELEPAGWRARLPEGKRNFLWELSALTGAWAEESFYTVGLFPPIVSQCPSKEPQLPLELPKQGEPSPRRPPASQSSLPVSHSPKIRLLSSSQRERQALQDLVDLAVEGLSSSPQPGSRGVPTGLDLVPSSLPLTGFVLPCKKTLKKDDSASLSLGLLVTDFGAMVNNPHLSDVQFQLDSGEVLYAHKFVLYARCPLLIQYVSTESFSSEEDGDLTQRALLSDVSSEAAHAFLNYLYMADTDMPPSLVPDLRSLALRFGVSDLVQLCEQVPAVVDLEGEQPEETSEDCESRAETFLELLRSVWVDNEEEVETLLKPELCEEERERVNEAEMEEIYEFAATQRKLLQWGRAADPDGSTNPHGEDGAVSEPSLAGVQSNRQLENTEHMESSGLEKEEALASWEQEGHSTPLQDQCPDWAGKAEAQDALGEATDDPSFCSRHRRGKECLPLHPNKAHGCKQPLPSNPRVSSELSQITVDHEEQSDHVRETQADMAQAPTPHSCSLVSQSSVDGSPSQSWLHLYHTSHLSPSVSQSHSSISRVASPRSLSPTTPTKQRRGSNIVTLRKDAGHHRGQQSSPIAGHRNRGILISPAKSPPIDLTQSVPEPLSPRAQDPLHFVKKEDEVILLLDSDEELEHTKTESVSKDSPEGRKVPEFSPRSSELFSVIDVEEDHEHFQSPLKREAGLQHGEEGQLGNQSALGCRDIPWLLCSQKTSLDEDSATDTSWLVPATPGVSRSRDCSSQTQIKSLKTRIPSDETAQQTPRPNLERRTMLETAQQFSVIMPHTQPITLGAFDSGRQAYRSPSHPYPRHHRLSSSQPSCPGPDFTRWSQKSSAPRPCLPNLPAADDVVEVGDSDDEVASHQGNSSPVLDGDPPGPMGDYCWNEPLSPIPIDHLNLERTGPLTTSSPSSQVLEALHSDDCHSPGLGTTPIRGSCGTLRESQERSSLAGSPEALWDDWNEEEGQSPEAPPVAQMLSTRTRKPDRPETPKGANQKKNLPPKVPITPMPRYSIMETPVLKKELDRFGVRALPKRQMVLKLKEIFQYTHQTLESDSEDEVQSPQIPAELPCRQASTTETCNPSRLPTGEPSHPDGDAQLPASQESMATSVDGSDNSFSSKSSSAEFGAAFEYSDEDKDEEVGVTASQAAIQAADTEEAVRRYIRSKPALHRQVLRYQPVELAELQAELKQNGIPVAMGKLSDILDAQCITFTTAAARKEKLKHKRRQPSGRKKKDQK.

The tract at residues 1-87 (MVPESAPNGN…ENEYKLDATD (87 aa)) is disordered. Polar residues predominate over residues 7-24 (PNGNSQPLPSCFTTTGVP). Residues 43–58 (KRADPERLRHASEESP) are compositionally biased toward basic and acidic residues. At S111 the chain carries Phosphoserine. K115 is covalently cross-linked (Glycyl lysine isopeptide (Lys-Gly) (interchain with G-Cter in SUMO2)). 2 consecutive UBZ4-type zinc fingers follow at residues 117–147 (LFFC…DEAE) and 157–185 (IPDC…VRME). Zn(2+)-binding residues include C120, C123, H138, C142, C160, and C163. K171 is covalently cross-linked (Glycyl lysine isopeptide (Lys-Gly) (interchain with G-Cter in SUMO2)). 2 residues coordinate Zn(2+): H176 and C180. Disordered stretches follow at residues 203 to 242 (EVDG…PEAP), 279 to 305 (GAEK…ETTG), and 387 to 418 (EPQL…SHSP). Residues 220-236 (LKRKGVTTKREPRRRKV) are compositionally biased toward basic residues. A Glycyl lysine isopeptide (Lys-Gly) (interchain with G-Cter in SUMO2) cross-link involves residue K283. Polar residues predominate over residues 296-305 (LVTQDSETTG). The interaction with PLK1 and TERF2-TERF2IP stretch occupies residues 499–1565 (MVNNPHLSDV…PSGRKKKDQK (1067 aa)). The region spanning 506–579 (SDVQFQLDSG…LYMADTDMPP (74 aa)) is the BTB domain. Residue K649 forms a Glycyl lysine isopeptide (Lys-Gly) (interchain with G-Cter in SUMO2) linkage. Disordered regions lie at residues 683–769 (RAAD…DPSF), 789–848 (GCKQ…SPSQ), 861–943 (PSVS…SPRA), 963–989 (DEEL…EFSP), 1063–1099 (PGVS…PNLE), 1128–1212 (GRQA…MGDY), and 1249–1337 (SDDC…ITPM). The segment covering 715 to 730 (ENTEHMESSGLEKEEA) has biased composition (basic and acidic residues). Over residues 798 to 808 (PRVSSELSQIT) the composition is skewed to polar residues. Basic and acidic residues predominate over residues 809-822 (VDHEEQSDHVRETQ). 2 stretches are compositionally biased toward low complexity: residues 833 to 848 (SCSL…SPSQ) and 861 to 875 (PSVS…RVAS). A phosphoserine mark is found at S845 and S875. The span at 877–894 (RSLSPTTPTKQRRGSNIV) shows a compositional bias: polar residues. Glycyl lysine isopeptide (Lys-Gly) (interchain with G-Cter in SUMO2) cross-links involve residues K886, K898, and K925. Phosphoserine occurs at positions 926 and 940. The segment covering 967-985 (EHTKTESVSKDSPEGRKVP) has biased composition (basic and acidic residues). K983 is covalently cross-linked (Glycyl lysine isopeptide (Lys-Gly) (interchain with G-Cter in SUMO2)). S988 carries the post-translational modification Phosphoserine. The interval 1120–1413 (ITLGAFDSGR…TTETCNPSRL (294 aa)) is interaction with MUS81. Over residues 1179–1189 (DVVEVGDSDDE) the composition is skewed to acidic residues. 2 positions are modified to phosphoserine: S1249 and S1254. A compositionally biased stretch (acidic residues) spans 1285 to 1295 (LWDDWNEEEGQ). Glycyl lysine isopeptide (Lys-Gly) (interchain with G-Cter in SUMO2) cross-links involve residues K1349 and K1350. Disordered regions lie at residues 1381-1449 (ESDS…SSKS) and 1546-1565 (KEKL…KDQK). A Phosphoserine modification is found at S1384. The segment covering 1401-1412 (QASTTETCNPSR) has biased composition (polar residues). Residues 1406-1565 (ETCNPSRLPT…PSGRKKKDQK (160 aa)) are interaction with SLX1. Over residues 1437 to 1449 (SVDGSDNSFSSKS) the composition is skewed to low complexity. Positions 1547 to 1565 (EKLKHKRRQPSGRKKKDQK) are enriched in basic residues.

Belongs to the SLX4 family. Forms a heterodimer with SLX1A/GIYD1. Interacts with ERCC4/XPF; catalytic subunit of the ERCC4-ERCC1 endonuclease. Interacts with MUS81; catalytic subunit of the MUS81-EME1 endonuclease. Interacts with MSH2; component of the MSH2-MSH3 mismatch repair complex. Interacts with TERF2-TERF2IP. Interacts with PLK1 and SLX4IP. In terms of tissue distribution, highly expressed in testis. Expressed in bone marrow, brain, thymus and weakly in heart, kidney and spleen.

Its subcellular location is the nucleus. In terms of biological role, regulatory subunit that interacts with and increases the activity of different structure-specific endonucleases. Has several distinct roles in protecting genome stability by resolving diverse forms of deleterious DNA structures originating from replication and recombination intermediates and from DNA damage. Component of the SLX1-SLX4 structure-specific endonuclease that resolves DNA secondary structures generated during DNA repair and recombination. Has endonuclease activity towards branched DNA substrates, introducing single-strand cuts in duplex DNA close to junctions with ss-DNA. Has a preference for 5'-flap structures, and promotes symmetrical cleavage of static and migrating Holliday junctions (HJs). Resolves HJs by generating two pairs of ligatable, nicked duplex products. Interacts with the structure-specific ERCC4-ERCC1 endonuclease and promotes the cleavage of bubble structures. Interacts with the structure-specific MUS81-EME1 endonuclease and promotes the cleavage of 3'-flap and replication fork-like structures. SLX4 is required for recovery from alkylation-induced DNA damage and is involved in the resolution of DNA double-strand breaks. The sequence is that of Structure-specific endonuclease subunit SLX4 (Slx4) from Mus musculus (Mouse).